The primary structure comprises 340 residues: Ketol-acid reductoisomerase (NADP(+)) (340 aa).

One can recognise a KARI N-terminal Rossmann domain in the interval Val3 to Thr182. NADP(+) is bound by residues Tyr26 to Gln29, Arg49, Ser53, and Asp83 to Gln86. His108 is a catalytic residue. Residue Gly134 coordinates NADP(+). Residues Thr183–Thr328 form the KARI C-terminal knotted domain. Residues Asp191, Glu195, Glu227, and Glu231 each contribute to the Mg(2+) site. Ser252 lines the substrate pocket.

This sequence belongs to the ketol-acid reductoisomerase family. Mg(2+) serves as cofactor.

The catalysed reaction is (2R)-2,3-dihydroxy-3-methylbutanoate + NADP(+) = (2S)-2-acetolactate + NADPH + H(+). The enzyme catalyses (2R,3R)-2,3-dihydroxy-3-methylpentanoate + NADP(+) = (S)-2-ethyl-2-hydroxy-3-oxobutanoate + NADPH + H(+). It functions in the pathway amino-acid biosynthesis; L-isoleucine biosynthesis; L-isoleucine from 2-oxobutanoate: step 2/4. Its pathway is amino-acid biosynthesis; L-valine biosynthesis; L-valine from pyruvate: step 2/4. In terms of biological role, involved in the biosynthesis of branched-chain amino acids (BCAA). Catalyzes an alkyl-migration followed by a ketol-acid reduction of (S)-2-acetolactate (S2AL) to yield (R)-2,3-dihydroxy-isovalerate. In the isomerase reaction, S2AL is rearranged via a Mg-dependent methyl migration to produce 3-hydroxy-3-methyl-2-ketobutyrate (HMKB). In the reductase reaction, this 2-ketoacid undergoes a metal-dependent reduction by NADPH to yield (R)-2,3-dihydroxy-isovalerate. This chain is Ketol-acid reductoisomerase (NADP(+)), found in Lactococcus lactis subsp. cremoris (strain SK11).